Reading from the N-terminus, the 822-residue chain is Probable alpha,alpha-trehalose-phosphate synthase [UDP-forming] 2 (822 aa).

The tract at residues 12 to 479 (PRLLVVANRL…GLDFMSELNG (468 aa)) is glycosyltransferase.

It in the N-terminal section; belongs to the glycosyltransferase 20 family. This sequence in the C-terminal section; belongs to the trehalose phosphatase family.

The enzyme catalyses D-glucose 6-phosphate + UDP-alpha-D-glucose = alpha,alpha-trehalose 6-phosphate + UDP + H(+). This chain is Probable alpha,alpha-trehalose-phosphate synthase [UDP-forming] 2 (TPS2), found in Arabidopsis thaliana (Mouse-ear cress).